The sequence spans 78 residues: UPF0235 protein AF_2072 (78 aa).

Belongs to the UPF0235 family.

In Archaeoglobus fulgidus (strain ATCC 49558 / DSM 4304 / JCM 9628 / NBRC 100126 / VC-16), this protein is UPF0235 protein AF_2072.